A 227-amino-acid chain; its full sequence is Cytochrome c oxidase subunit 2 (227 aa).

Over 1–14 the chain is Mitochondrial intermembrane; that stretch reads MAYPMQLGLQDATS. A helical membrane pass occupies residues 15-45; sequence PIMEELMNFHDHTLMIVFLISSLVLYLISLM. Over 46 to 59 the chain is Mitochondrial matrix; sequence LTTKLIHTNTMDAQ. Residues 60 to 87 form a helical membrane-spanning segment; sequence EVETIWTILPAIILVLIALPSLRILYMM. Topologically, residues 88–227 are mitochondrial intermembrane; it reads DEINNPVLTV…FFENWSSSMT (140 aa). Histidine 161, cysteine 196, glutamate 198, cysteine 200, histidine 204, and methionine 207 together coordinate Cu cation. Glutamate 198 is a binding site for Mg(2+).

Belongs to the cytochrome c oxidase subunit 2 family. As to quaternary structure, component of the cytochrome c oxidase (complex IV, CIV), a multisubunit enzyme composed of 14 subunits. The complex is composed of a catalytic core of 3 subunits MT-CO1, MT-CO2 and MT-CO3, encoded in the mitochondrial DNA, and 11 supernumerary subunits COX4I, COX5A, COX5B, COX6A, COX6B, COX6C, COX7A, COX7B, COX7C, COX8 and NDUFA4, which are encoded in the nuclear genome. The complex exists as a monomer or a dimer and forms supercomplexes (SCs) in the inner mitochondrial membrane with NADH-ubiquinone oxidoreductase (complex I, CI) and ubiquinol-cytochrome c oxidoreductase (cytochrome b-c1 complex, complex III, CIII), resulting in different assemblies (supercomplex SCI(1)III(2)IV(1) and megacomplex MCI(2)III(2)IV(2)). Found in a complex with TMEM177, COA6, COX18, COX20, SCO1 and SCO2. Interacts with TMEM177 in a COX20-dependent manner. Interacts with COX20. Interacts with COX16. The cofactor is Cu cation.

It localises to the mitochondrion inner membrane. The catalysed reaction is 4 Fe(II)-[cytochrome c] + O2 + 8 H(+)(in) = 4 Fe(III)-[cytochrome c] + 2 H2O + 4 H(+)(out). Component of the cytochrome c oxidase, the last enzyme in the mitochondrial electron transport chain which drives oxidative phosphorylation. The respiratory chain contains 3 multisubunit complexes succinate dehydrogenase (complex II, CII), ubiquinol-cytochrome c oxidoreductase (cytochrome b-c1 complex, complex III, CIII) and cytochrome c oxidase (complex IV, CIV), that cooperate to transfer electrons derived from NADH and succinate to molecular oxygen, creating an electrochemical gradient over the inner membrane that drives transmembrane transport and the ATP synthase. Cytochrome c oxidase is the component of the respiratory chain that catalyzes the reduction of oxygen to water. Electrons originating from reduced cytochrome c in the intermembrane space (IMS) are transferred via the dinuclear copper A center (CU(A)) of subunit 2 and heme A of subunit 1 to the active site in subunit 1, a binuclear center (BNC) formed by heme A3 and copper B (CU(B)). The BNC reduces molecular oxygen to 2 water molecules using 4 electrons from cytochrome c in the IMS and 4 protons from the mitochondrial matrix. This Desmodillus auricularis (Cape short-eared gerbil) protein is Cytochrome c oxidase subunit 2 (MT-CO2).